Consider the following 600-residue polypeptide: Elongation factor 4 (600 aa).

The 183-residue stretch at 4 to 186 (DTIRNFSIIA…EIVKKIPPPE (183 aa)) folds into the tr-type G domain. Residues 16–21 (DHGKST) and 133–136 (NKID) contribute to the GTP site.

It belongs to the TRAFAC class translation factor GTPase superfamily. Classic translation factor GTPase family. LepA subfamily.

Its subcellular location is the cell inner membrane. It carries out the reaction GTP + H2O = GDP + phosphate + H(+). Functionally, required for accurate and efficient protein synthesis under certain stress conditions. May act as a fidelity factor of the translation reaction, by catalyzing a one-codon backward translocation of tRNAs on improperly translocated ribosomes. Back-translocation proceeds from a post-translocation (POST) complex to a pre-translocation (PRE) complex, thus giving elongation factor G a second chance to translocate the tRNAs correctly. Binds to ribosomes in a GTP-dependent manner. In Geobacter sulfurreducens (strain ATCC 51573 / DSM 12127 / PCA), this protein is Elongation factor 4.